The primary structure comprises 379 residues: MNNTEYYERLGVDKNASQDEIKKAYRKMSKKYHPDLNKEEGAEDKYKEVQEAYETLSDEQKRAAYDQYGEAGANGGFGGGGFGGASGFSGFGGASGGFGGFEDIFSSFFGGGGAQVNPNAPRQGDDLQYRINLKFEEAIFGVEKQVKYNREELCHTCDGSGAKAGTHPETCHKCGGRGQINVVRDTPLGRMQTQTTCDVCHGTGKEIKEKCTTCHGSGHEKVAHTVKVTVPAGVETGQKMRLQGQGDAGVNGGPYGDLYVVFQVEASDKFERDGAEIYYKMPMDFVQAALGDEVEVPTVHGNVKLKIPAGTQTGANFRLKGKGAPKLRGSGNGDQYVIINIVTPKNMNQAQKEALQAFAKASGIEVSGSGKKGFFDKFK.

One can recognise a J domain in the interval 5-69; sequence EYYERLGVDK…QKRAAYDQYG (65 aa). Residues 141–223 form a CR-type zinc finger; sequence GVEKQVKYNR…CHGSGHEKVA (83 aa). Residues C154, C157, C171, C174, C197, C200, C211, and C214 each coordinate Zn(2+). CXXCXGXG motif repeat units follow at residues 154–161, 171–178, 197–204, and 211–218; these read CHTCDGSG, CHKCGGRG, CDVCHGTG, and CTTCHGSG.

This sequence belongs to the DnaJ family. In terms of assembly, homodimer. It depends on Zn(2+) as a cofactor.

The protein localises to the cytoplasm. In terms of biological role, participates actively in the response to hyperosmotic and heat shock by preventing the aggregation of stress-denatured proteins and by disaggregating proteins, also in an autonomous, DnaK-independent fashion. Unfolded proteins bind initially to DnaJ; upon interaction with the DnaJ-bound protein, DnaK hydrolyzes its bound ATP, resulting in the formation of a stable complex. GrpE releases ADP from DnaK; ATP binding to DnaK triggers the release of the substrate protein, thus completing the reaction cycle. Several rounds of ATP-dependent interactions between DnaJ, DnaK and GrpE are required for fully efficient folding. Also involved, together with DnaK and GrpE, in the DNA replication of plasmids through activation of initiation proteins. The sequence is that of Chaperone protein DnaJ from Lactococcus lactis subsp. cremoris (strain SK11).